The primary structure comprises 50 residues: Metallothionein zym1 (50 aa).

12 residues coordinate Zn(2+): C7, C15, C17, C21, C23, C26, C30, C32, C40, C42, C45, and C47.

It belongs to the metallothionein superfamily.

The protein localises to the cytoplasm. It is found in the nucleus. Metallothionein involved in tolerance to zinc and cadmium. Binds four zinc ions. The chain is Metallothionein zym1 (zym1) from Schizosaccharomyces pombe (strain 972 / ATCC 24843) (Fission yeast).